Here is a 467-residue protein sequence, read N- to C-terminus: Trigger factor (467 aa).

The PPIase FKBP-type domain maps to 174–261 (SDIAILTFKG…LQDLKTRELP (88 aa)). The interval 439–467 (PKKALNEKVKSSKPKNTQKKTDKTKKDSP) is disordered. Residues 457-467 (KKTDKTKKDSP) are compositionally biased toward basic and acidic residues.

The protein belongs to the FKBP-type PPIase family. Tig subfamily.

Its subcellular location is the cytoplasm. The catalysed reaction is [protein]-peptidylproline (omega=180) = [protein]-peptidylproline (omega=0). Involved in protein export. Acts as a chaperone by maintaining the newly synthesized protein in an open conformation. Functions as a peptidyl-prolyl cis-trans isomerase. This chain is Trigger factor, found in Prochlorococcus marinus (strain SARG / CCMP1375 / SS120).